The following is a 687-amino-acid chain: Putative metabolite transport protein YDL199C (687 aa).

Positions 1-22 (MKPPLNMSRSNKPLTQEANSSA) are disordered. The Extracellular portion of the chain corresponds to 1–122 (MKPPLNMSRS…RHSSRVLRTS (122 aa)). Over residues 7 to 22 (MSRSNKPLTQEANSSA) the composition is skewed to polar residues. Residue Ser90 is modified to Phosphoserine. Residues 123–143 (FISFVVLVSSLSGLDQGLISG) traverse the membrane as a helical segment. Over 144–164 (NVMTLSFQKYFHYPLTSPLGN) the chain is Cytoplasmic. A helical transmembrane segment spans residues 165 to 185 (IVSIVNLGAFMASLFVYSGIL). At 186–192 (EPCSRKK) the chain is on the extracellular side. Residues 193–213 (MLQISTMIYSLGAIVQVLALN) form a helical membrane-spanning segment. Over 214–216 (QWC) the chain is Cytoplasmic. Residues 217–237 (LLLGRFLLGVGMGFAFSMVII) form a helical membrane-spanning segment. Residues 238 to 251 (YQFEFPLPCIRKRT) are Extracellular-facing. A helical membrane pass occupies residues 252 to 272 (LISIQCVSSVIAYSFGIWINC). The Cytoplasmic portion of the chain corresponds to 273 to 283 (AFRYLGFAWRY). The chain crosses the membrane as a helical span at residues 284–304 (PLSTHVALGIILNLMSFYLIL). Residues 305 to 410 (ESPSWLLKQK…MGRGERKSIY (106 aa)) are Extracellular-facing. Residues 411-431 (LTGLNALIYSIVILAYVPLVL) form a helical membrane-spanning segment. At 432 to 439 (RKRKEKTN) the chain is on the cytoplasmic side. A helical membrane pass occupies residues 440 to 460 (VLLGSIVMCALLFTISFTDWF). The Extracellular segment spans residues 461 to 469 (PKSTTRYIS). The helical transmembrane segment at 470-490 (ILFAVFLFTHFISWDSIGWVM) threads the bilayer. Over 491–500 (TIELLPHLSQ) the chain is Cytoplasmic. The helical transmembrane segment at 501 to 521 (APVILLVSNFYWIFKWFVSLI) threads the bilayer. The Extracellular segment spans residues 522-533 (TPILIDRLSWKF). A helical membrane pass occupies residues 534–554 (YLIPSLSSFISIIFVLKIFPI). At 555-687 (ETRDERLDSD…QNSPGDMAVA (133 aa)) the chain is on the cytoplasmic side. 2 disordered regions span residues 561–587 (LDSD…SEFS) and 654–687 (SFHN…MAVA). Residues 660–673 (DPNISDNIAANKPS) are compositionally biased toward polar residues.

This sequence belongs to the major facilitator superfamily. Sugar transporter (TC 2.A.1.1) family.

It localises to the membrane. The chain is Putative metabolite transport protein YDL199C from Saccharomyces cerevisiae (strain ATCC 204508 / S288c) (Baker's yeast).